The sequence spans 399 residues: Elongation factor Tu (399 aa).

The region spanning 10-209 (KPHVNIGTIG…KVDEYIPTPV (200 aa)) is the tr-type G domain. Positions 19-26 (GHVDHGKT) are G1. 19–26 (GHVDHGKT) is a binding site for GTP. Thr-26 lines the Mg(2+) pocket. The tract at residues 60–64 (GITIA) is G2. A G3 region spans residues 81–84 (DCPG). GTP-binding positions include 81 to 85 (DCPGH) and 136 to 139 (NKAD). Positions 136–139 (NKAD) are G4. Residues 174 to 176 (SAL) form a G5 region.

The protein belongs to the TRAFAC class translation factor GTPase superfamily. Classic translation factor GTPase family. EF-Tu/EF-1A subfamily. In terms of assembly, monomer.

The protein resides in the cytoplasm. The enzyme catalyses GTP + H2O = GDP + phosphate + H(+). Its function is as follows. GTP hydrolase that promotes the GTP-dependent binding of aminoacyl-tRNA to the A-site of ribosomes during protein biosynthesis. This chain is Elongation factor Tu, found in Campylobacter curvus (strain 525.92).